The primary structure comprises 154 residues: Probable prefoldin subunit 5 (154 aa).

This sequence belongs to the prefoldin subunit alpha family. Heterohexamer of two PFD-alpha type and four PFD-beta type subunits. Interacts with byr1.

The protein resides in the cytoplasm. In terms of biological role, binds specifically to cytosolic chaperonin (c-CPN) and transfers target proteins to it. Binds to nascent polypeptide chain and promotes folding in an environment in which there are many competing pathways for nonnative proteins. Required for normal cytoskeletal function and when bound to byr1, is involved in the regulation of sexual differentiation. In Schizosaccharomyces pombe (strain 972 / ATCC 24843) (Fission yeast), this protein is Probable prefoldin subunit 5 (bob1).